The chain runs to 193 residues: Thymidine kinase (193 aa).

Residues 16 to 23 (GPMFSGKS) and 89 to 92 (DEIQ) contribute to the ATP site. Glu-90 serves as the catalytic Proton acceptor. Zn(2+)-binding residues include Cys-146, Cys-149, Cys-184, and Cys-187.

Belongs to the thymidine kinase family. As to quaternary structure, homotetramer.

Its subcellular location is the cytoplasm. The enzyme catalyses thymidine + ATP = dTMP + ADP + H(+). In Caldanaerobacter subterraneus subsp. tengcongensis (strain DSM 15242 / JCM 11007 / NBRC 100824 / MB4) (Thermoanaerobacter tengcongensis), this protein is Thymidine kinase.